The following is a 324-amino-acid chain: Adenine deaminase (324 aa).

The Zn(2+) site is built by H11, H13, and H189. E192 (proton donor) is an active-site residue. D270 contacts Zn(2+). D271 is a substrate binding site.

It belongs to the metallo-dependent hydrolases superfamily. Adenosine and AMP deaminases family. Adenine deaminase type 2 subfamily. Zn(2+) is required as a cofactor.

The enzyme catalyses adenine + H2O + H(+) = hypoxanthine + NH4(+). Catalyzes the hydrolytic deamination of adenine to hypoxanthine. Plays an important role in the purine salvage pathway and in nitrogen catabolism. This is Adenine deaminase from Sinorhizobium medicae (strain WSM419) (Ensifer medicae).